The sequence spans 159 residues: NAD(P)H-quinone oxidoreductase subunit J, chloroplastic (159 aa).

This sequence belongs to the complex I 30 kDa subunit family. NDH is composed of at least 16 different subunits, 5 of which are encoded in the nucleus.

It is found in the plastid. Its subcellular location is the chloroplast thylakoid membrane. It catalyses the reaction a plastoquinone + NADH + (n+1) H(+)(in) = a plastoquinol + NAD(+) + n H(+)(out). The enzyme catalyses a plastoquinone + NADPH + (n+1) H(+)(in) = a plastoquinol + NADP(+) + n H(+)(out). In terms of biological role, NDH shuttles electrons from NAD(P)H:plastoquinone, via FMN and iron-sulfur (Fe-S) centers, to quinones in the photosynthetic chain and possibly in a chloroplast respiratory chain. The immediate electron acceptor for the enzyme in this species is believed to be plastoquinone. Couples the redox reaction to proton translocation, and thus conserves the redox energy in a proton gradient. The polypeptide is NAD(P)H-quinone oxidoreductase subunit J, chloroplastic (Populus trichocarpa (Western balsam poplar)).